The following is a 385-amino-acid chain: DNA replication and repair protein RecF (385 aa).

30–37 (GPNGFGKT) contacts ATP.

Belongs to the RecF family.

It localises to the cytoplasm. Its function is as follows. The RecF protein is involved in DNA metabolism; it is required for DNA replication and normal SOS inducibility. RecF binds preferentially to single-stranded, linear DNA. It also seems to bind ATP. This chain is DNA replication and repair protein RecF, found in Mycobacterium marinum (strain ATCC BAA-535 / M).